A 524-amino-acid chain; its full sequence is Probable pectinesterase/pectinesterase inhibitor 19 (524 aa).

The N-terminal stretch at Met1–Lys22 is a signal peptide. Positions Glu23–Leu172 are pectinesterase inhibitor 19. The interval Asp215–Glu510 is pectinesterase 19. Residues Asn265 and Asn281 are each glycosylated (N-linked (GlcNAc...) asparagine). Thr290 is a binding site for substrate. Asp343 serves as the catalytic Proton donor; for pectinesterase activity. Cys357 and Cys377 are disulfide-bonded. Catalysis depends on Asp364, which acts as the Nucleophile; for pectinesterase activity. An N-linked (GlcNAc...) asparagine glycan is attached at Asn412. 2 residues coordinate substrate: Arg430 and Trp432.

In the N-terminal section; belongs to the PMEI family. This sequence in the C-terminal section; belongs to the pectinesterase family. As to expression, expressed in siliques, but not in flower buds.

Its subcellular location is the secreted. The protein localises to the cell wall. The catalysed reaction is [(1-&gt;4)-alpha-D-galacturonosyl methyl ester](n) + n H2O = [(1-&gt;4)-alpha-D-galacturonosyl](n) + n methanol + n H(+). It participates in glycan metabolism; pectin degradation; 2-dehydro-3-deoxy-D-gluconate from pectin: step 1/5. Functionally, acts in the modification of cell walls via demethylesterification of cell wall pectin. The sequence is that of Probable pectinesterase/pectinesterase inhibitor 19 (PME19) from Arabidopsis thaliana (Mouse-ear cress).